Reading from the N-terminus, the 358-residue chain is UDP-N-acetylglucosamine--N-acetylmuramyl-(pentapeptide) pyrophosphoryl-undecaprenol N-acetylglucosamine transferase (358 aa).

UDP-N-acetyl-alpha-D-glucosamine-binding positions include 11–13 (TGG), asparagine 124, arginine 164, serine 195, and glutamine 291.

The protein belongs to the glycosyltransferase 28 family. MurG subfamily.

Its subcellular location is the cell inner membrane. It catalyses the reaction di-trans,octa-cis-undecaprenyl diphospho-N-acetyl-alpha-D-muramoyl-L-alanyl-D-glutamyl-meso-2,6-diaminopimeloyl-D-alanyl-D-alanine + UDP-N-acetyl-alpha-D-glucosamine = di-trans,octa-cis-undecaprenyl diphospho-[N-acetyl-alpha-D-glucosaminyl-(1-&gt;4)]-N-acetyl-alpha-D-muramoyl-L-alanyl-D-glutamyl-meso-2,6-diaminopimeloyl-D-alanyl-D-alanine + UDP + H(+). Its pathway is cell wall biogenesis; peptidoglycan biosynthesis. In terms of biological role, cell wall formation. Catalyzes the transfer of a GlcNAc subunit on undecaprenyl-pyrophosphoryl-MurNAc-pentapeptide (lipid intermediate I) to form undecaprenyl-pyrophosphoryl-MurNAc-(pentapeptide)GlcNAc (lipid intermediate II). The chain is UDP-N-acetylglucosamine--N-acetylmuramyl-(pentapeptide) pyrophosphoryl-undecaprenol N-acetylglucosamine transferase from Leptospira borgpetersenii serovar Hardjo-bovis (strain JB197).